Reading from the N-terminus, the 165-residue chain is uncharacterized protein (165 aa).

It belongs to the SixA phosphatase family.

This is an uncharacterized protein from Picosynechococcus sp. (strain ATCC 27264 / PCC 7002 / PR-6) (Agmenellum quadruplicatum).